The primary structure comprises 158 residues: tRNA (cytidine(34)-2'-O)-methyltransferase (158 aa).

Residues Gly-103, Ile-123, and Ser-131 each coordinate S-adenosyl-L-methionine.

This sequence belongs to the class IV-like SAM-binding methyltransferase superfamily. RNA methyltransferase TrmH family. TrmL subfamily. Homodimer.

The protein localises to the cytoplasm. It catalyses the reaction cytidine(34) in tRNA + S-adenosyl-L-methionine = 2'-O-methylcytidine(34) in tRNA + S-adenosyl-L-homocysteine + H(+). The enzyme catalyses 5-carboxymethylaminomethyluridine(34) in tRNA(Leu) + S-adenosyl-L-methionine = 5-carboxymethylaminomethyl-2'-O-methyluridine(34) in tRNA(Leu) + S-adenosyl-L-homocysteine + H(+). Its function is as follows. Methylates the ribose at the nucleotide 34 wobble position in the two leucyl isoacceptors tRNA(Leu)(CmAA) and tRNA(Leu)(cmnm5UmAA). Catalyzes the methyl transfer from S-adenosyl-L-methionine to the 2'-OH of the wobble nucleotide. The chain is tRNA (cytidine(34)-2'-O)-methyltransferase from Ancylobacter novellus (strain ATCC 8093 / DSM 506 / JCM 20403 / CCM 1077 / IAM 12100 / NBRC 12443 / NCIMB 10456) (Starkeya novella).